A 332-amino-acid chain; its full sequence is ADP-L-glycero-D-manno-heptose-6-epimerase (332 aa).

Residues 10 to 11, 31 to 32, lysine 38, 74 to 78, and asparagine 91 contribute to the NADP(+) site; these read FI, DD, and QGACS. Tyrosine 138 serves as the catalytic Proton acceptor. Lysine 142 is a binding site for NADP(+). Residue asparagine 167 participates in substrate binding. 2 residues coordinate NADP(+): valine 168 and lysine 176. Catalysis depends on lysine 176, which acts as the Proton acceptor. Residues arginine 178, histidine 185, 199–202, arginine 212, and tyrosine 291 each bind substrate; that span reads FSGW.

This sequence belongs to the NAD(P)-dependent epimerase/dehydratase family. HldD subfamily. Homopentamer. NADP(+) is required as a cofactor.

The catalysed reaction is ADP-D-glycero-beta-D-manno-heptose = ADP-L-glycero-beta-D-manno-heptose. Its pathway is nucleotide-sugar biosynthesis; ADP-L-glycero-beta-D-manno-heptose biosynthesis; ADP-L-glycero-beta-D-manno-heptose from D-glycero-beta-D-manno-heptose 7-phosphate: step 4/4. Catalyzes the interconversion between ADP-D-glycero-beta-D-manno-heptose and ADP-L-glycero-beta-D-manno-heptose via an epimerization at carbon 6 of the heptose. The sequence is that of ADP-L-glycero-D-manno-heptose-6-epimerase from Bordetella avium (strain 197N).